Reading from the N-terminus, the 1891-residue chain is Endoribonuclease Dicer-L (1891 aa).

One can recognise a Helicase ATP-binding domain in the interval 41-217 (LLEAALDHNT…DLEEKIQKLE (177 aa)). 54-61 (LNSGSGKT) is a binding site for ATP. The DECH box motif lies at 165–168 (DECH). One can recognise a Helicase C-terminal domain in the interval 425–594 (SFPSPFTNIL…SIDCGNTESE (170 aa)). The Dicer dsRNA-binding fold domain occupies 622–714 (AIGHINRYCA…MPVGKETVKY (93 aa)). The 148-residue stretch at 887–1034 (KFVEDIEKSE…LVPELCAIHP (148 aa)) folds into the PAZ domain. 2 RNase III domains span residues 1248–1379 (TSDM…ETSG) and 1635–1793 (FENF…MDSG). Residues E1292, D1370, E1373, E1674, D1779, and E1782 each contribute to the Mg(2+) site. Residues 1818 to 1883 (VPRSPVRELL…ARRALRSLKA (66 aa)) form the DRBM domain.

Belongs to the helicase family. Dicer subfamily. As to quaternary structure, component of the RISC loading complex (RLC), or micro-RNA (miRNA) loading complex (miRLC), which is composed of dicer1, ago2 and tarbp2; dicer1 and tarbp2 are required to process precursor miRNAs (pre-miRNAs) to mature miRNAs and then load them onto ago2. Note that the trimeric RLC/miRLC is also referred to as RISC. The cofactor is Mg(2+). Mn(2+) is required as a cofactor.

The protein localises to the cytoplasm. The enzyme catalyses Endonucleolytic cleavage to 5'-phosphomonoester.. In terms of biological role, double-stranded RNA (dsRNA) endoribonuclease playing a central role in short dsRNA-mediated post-transcriptional gene silencing. Cleaves naturally occurring long dsRNAs and short hairpin pre-microRNAs (miRNA) into fragments of 21 to 23 nucleotides with 3' overhang of two nucleotides, producing respectively short interfering RNAs (siRNA) and mature microRNAs. SiRNAs and miRNAs serve as guide to direct the RNA-induced silencing complex (RISC) to complementary RNAs to degrade them or prevent their translation. Gene silencing mediated by siRNAs, also called RNA interference, controls the elimination of transcripts from mobile and repetitive DNA elements of the genome but also the degradation of exogenous RNA of viral origin for instance. The miRNA pathway on the other side is a mean to specifically regulate the expression of target genes. During embryonic development, at the left-right organizer, post-transcriptionally regulates the expression of dand5 in flow sensor cells. In post-flow stages, acts along with Bicc1 to repress dand5 mRNA translation and decay. Decreased Dand5 expression lifts repression of Nodal and defines leftness by induction of the lateral plate mesoderm Nodal signaling cascade. The chain is Endoribonuclease Dicer-L (dicer1.L) from Xenopus laevis (African clawed frog).